The chain runs to 354 residues: Transcription activator of gluconeogenesis ERT1-1 (354 aa).

The segment at 1–29 (MSFYPILRGPAKQESPPPPPAPKKRRKTA) is disordered. The zn(2)-C6 fungal-type DNA-binding region spans 32-60 (CLHCQKAHLTCDEGRPCARCIKKNMGDQC). Disordered stretches follow at residues 71–111 (LVGL…FGSS) and 128–169 (DTSS…QGSP). The segment covering 81 to 98 (QATQQKQQQQQQQQQAVQ) has biased composition (low complexity). The segment covering 159–169 (SQTAGTPQGSP) has biased composition (polar residues).

Belongs to the ERT1/acuK family.

It is found in the nucleus. Its function is as follows. Transcription factor which regulates nonfermentable carbon utilization. Activator of gluconeogenetic genes. The polypeptide is Transcription activator of gluconeogenesis ERT1-1 (ERT1-1) (Yarrowia lipolytica (strain CLIB 122 / E 150) (Yeast)).